The chain runs to 590 residues: Aspartate--tRNA ligase (590 aa).

Glu-174 contributes to the L-aspartate binding site. An aspartate region spans residues 198 to 201 (QLMK). L-aspartate is bound at residue Arg-220. Residues 220–222 (RDE) and Gln-229 contribute to the ATP site. His-443 lines the L-aspartate pocket. Glu-484 is an ATP binding site. Arg-491 lines the L-aspartate pocket. 536 to 539 (GLDR) contributes to the ATP binding site.

This sequence belongs to the class-II aminoacyl-tRNA synthetase family. Type 1 subfamily. Homodimer.

The protein localises to the cytoplasm. It carries out the reaction tRNA(Asp) + L-aspartate + ATP = L-aspartyl-tRNA(Asp) + AMP + diphosphate. Functionally, catalyzes the attachment of L-aspartate to tRNA(Asp) in a two-step reaction: L-aspartate is first activated by ATP to form Asp-AMP and then transferred to the acceptor end of tRNA(Asp). The polypeptide is Aspartate--tRNA ligase (Lactococcus lactis subsp. cremoris (strain MG1363)).